A 544-amino-acid polypeptide reads, in one-letter code: Membrane protein insertase YidC (544 aa).

5 helical membrane passes run Leu13–Leu33, Trp343–Phe363, Leu409–Val429, Leu461–Leu481, and Met506–Ile526.

It belongs to the OXA1/ALB3/YidC family. Type 1 subfamily. Interacts with the Sec translocase complex via SecD. Specifically interacts with transmembrane segments of nascent integral membrane proteins during membrane integration.

It is found in the cell inner membrane. Its function is as follows. Required for the insertion and/or proper folding and/or complex formation of integral membrane proteins into the membrane. Involved in integration of membrane proteins that insert both dependently and independently of the Sec translocase complex, as well as at least some lipoproteins. Aids folding of multispanning membrane proteins. The polypeptide is Membrane protein insertase YidC (Borreliella burgdorferi (strain ATCC 35210 / DSM 4680 / CIP 102532 / B31) (Borrelia burgdorferi)).